Here is a 240-residue protein sequence, read N- to C-terminus: MSEVKYKRVILKLSGEALAGEKGFGINPPVIKTVAEELKDVYDMGVQIAIVVGGGNMWRGEAGAQMGMERAQADYIGMLATIMNALALQDNLESIGVPTRVQTSIEMRQIAEPYIRRKAMRHLEKRRIVIFAGGTGSPYFSTDTTAALRAAEINADAILMAKNGVDGVYSADPNKDASAVKFDTLTHLDIINKGLQVMDTTASSLSMDNDIPVVVFNLNEPGNIRKVVAGEHIGTTVRGK.

12–15 (KLSG) provides a ligand contact to ATP. The interval 20–25 (GEKGFG) is involved in allosteric activation by GTP. Residue Gly-54 coordinates UMP. Residues Gly-55 and Arg-59 each coordinate ATP. Residues Asp-74 and 135 to 142 (TGSPYFST) contribute to the UMP site. ATP contacts are provided by Asn-163, Tyr-169, and Asp-172.

This sequence belongs to the UMP kinase family. As to quaternary structure, homohexamer.

Its subcellular location is the cytoplasm. It catalyses the reaction UMP + ATP = UDP + ADP. Its pathway is pyrimidine metabolism; CTP biosynthesis via de novo pathway; UDP from UMP (UMPK route): step 1/1. Allosterically activated by GTP. Inhibited by UTP. Catalyzes the reversible phosphorylation of UMP to UDP. The sequence is that of Uridylate kinase from Lactiplantibacillus plantarum (strain ATCC BAA-793 / NCIMB 8826 / WCFS1) (Lactobacillus plantarum).